We begin with the raw amino-acid sequence, 240 residues long: uncharacterized protein (240 aa).

The signal sequence occupies residues 1–17 (MRMAFMLLALLFSFRNA).

This is an uncharacterized protein from Treponema pallidum (strain Nichols).